We begin with the raw amino-acid sequence, 1372 residues long: MAQQTFTGRKRVRKFFGHIKEVAEMPNLIEVQKASYDQFLMVDEPTGGRPDEGLQAVFRSVFPISDFSGTSMLEFVRYEFEPPKYDVDECRQRGMTFAAPLKVTLRLIVFDIDEETGAKSVKDIKEQDVYMGDIPLMTMNGTFIVNGTERVIVSQMHRSPGVFFDHDKGKTHSSGKLLFAARVIPYRGSWLDIEFDAKDIVFARIDRRRKIPVTSLMFALGLDGEQILSTFYKKLIYKRIKEGWRVPFDANRFRGYSTVNDLIDADTGKVVLEAGKKLTVRTARQLQEKGLKALRMSDEELLGNYIAEDLVNPKTGEIYAEAGEEITDKLFKVLNEQGYKDLPLLDIDHVNVGPYIRNTLSADKNMTREDALFDIYRVMRPGEPPTLDSAQAMFQSLFFDAERYDLSAVGRVKMNMRLELDAPDTQRTLRKEDILAVIKTLVDLRDGKGEIDDIDHLGNRRVRSVGELMENQYRIGLLRMERAIKERMSSVDIDTVMPQDLINAKPAAAAVREFFGSSQLSQFMDQTNPLSEITHKRRLSALGPGGLTRERAGFEVRDVHPTHYGRICPIETPEGPNIGLINSLATFARVNKYGFVETPYRKVRDGRVTDEVVYLSAMEEGRYRVAQANVPLDAKGRFTEDLVVCRHAGEVVPMTPDKVDYMDVSPKQLVSVAAALIPFLENDDANRALMGSNMQRQAVPLVRAEAPFVGTGMEGVVARDSGAAIAARRSGVVDQIDATRVVIRATEDLDPTKSGVDIYRLMKFQRSNQSTCINQRPLVKVGDIVKKGDIIADGPSTDLGELALGRNVLVAFMPWNGYNFEDSILLSERIVKEDVFTSIHIEEFEVMARDTKLGPEEITRDIPNVSEEALKNLDEAGIVYIGAEVRAGDILVGKITPKGESPMTPEEKLLRAIFGEKASDVRDTSLRVPPGVQGTIVEVRVFNRHGVDKDERALAIEREEIERLAKDRDDEQAILDRNVYSRLADMLDGRQGISGPKGFKKDTKITRAVLDEYPKSQWWLFASANDKLMAEIEAMRKQYDESKKGLEQRFLDKVEKLQRGDELPPGVMKMVKVFVAVKRKIQPGDKMAGRHGNKGVVSKIVPIEDMPFLEDGTHADIVLNPLGVPSRMNVGQILETHLGWACAGLGKRIAQTVDAYLSKQDVKPLKETLKRIYGEDETIKSLNDNELLELGHNLSRGVPIATPVFDGAKEADIEEMLKLAGMDASGQSTVYDGRTGDPFDRKVTVGYIYMLKLHHLVDDKIHARSIGPYSLVTQQPLGGKAQFGGQRFGEMEVWALEAYGAAYTLQEMLTVKSDDVAGRTKVYEAIVRGDDTFEAGIPESFNVLVKEMRSLGLNVDLHNSKLGPAPTSEAAE.

The protein belongs to the RNA polymerase beta chain family. As to quaternary structure, the RNAP catalytic core consists of 2 alpha, 1 beta, 1 beta' and 1 omega subunit. When a sigma factor is associated with the core the holoenzyme is formed, which can initiate transcription.

It catalyses the reaction RNA(n) + a ribonucleoside 5'-triphosphate = RNA(n+1) + diphosphate. In terms of biological role, DNA-dependent RNA polymerase catalyzes the transcription of DNA into RNA using the four ribonucleoside triphosphates as substrates. This Bradyrhizobium sp. (strain BTAi1 / ATCC BAA-1182) protein is DNA-directed RNA polymerase subunit beta.